Consider the following 193-residue polypeptide: Molybdopterin synthase catalytic subunit (193 aa).

Residues 118–119 (HR), Lys-134, and 141–143 (KKE) each bind substrate. The disordered stretch occupies residues 159–193 (DRTTTDGTTASSPAPATRPAKGGGCCGRKVRVNES). The span at 163 to 178 (TDGTTASSPAPATRPA) shows a compositional bias: low complexity.

The protein belongs to the MoaE family. MOCS2B subfamily. Heterotetramer; composed of 2 small (MOCS2A) and 2 large (MOCS2B) subunits.

The protein resides in the cytoplasm. It catalyses the reaction 2 [molybdopterin-synthase sulfur-carrier protein]-C-terminal-Gly-aminoethanethioate + cyclic pyranopterin phosphate + H2O = molybdopterin + 2 [molybdopterin-synthase sulfur-carrier protein]-C-terminal Gly-Gly + 2 H(+). It participates in cofactor biosynthesis; molybdopterin biosynthesis. In terms of biological role, catalytic subunit of the molybdopterin synthase complex, a complex that catalyzes the conversion of precursor Z into molybdopterin. Acts by mediating the incorporation of 2 sulfur atoms from thiocarboxylated MOCS2A into precursor Z to generate a dithiolene group. This Oryza sativa subsp. japonica (Rice) protein is Molybdopterin synthase catalytic subunit.